A 353-amino-acid polypeptide reads, in one-letter code: Basic membrane protein C (353 aa).

The signal sequence occupies residues 1–16; the sequence is MFKRFIFITLSLLVFA. A lipid anchor (N-palmitoyl cysteine) is attached at C17. C17 carries S-diacylglycerol cysteine lipidation.

The protein belongs to the BMP lipoprotein family. In terms of assembly, monomer.

It is found in the cell inner membrane. Its function is as follows. May be part of an ABC-type nucleoside uptake system involved in the purine salvage pathway. This Borreliella burgdorferi (strain N40) (Borrelia burgdorferi) protein is Basic membrane protein C (bmpC).